Here is a 370-residue protein sequence, read N- to C-terminus: Probable phosphoserine aminotransferase (370 aa).

L-glutamate is bound at residue R45. Pyridoxal 5'-phosphate is bound by residues 79–80 (GT), W105, T154, D175, and Q198. Residue K199 is modified to N6-(pyridoxal phosphate)lysine. Residue 240–241 (NT) coordinates pyridoxal 5'-phosphate.

Belongs to the class-V pyridoxal-phosphate-dependent aminotransferase family. SerC subfamily. As to quaternary structure, homodimer. The cofactor is pyridoxal 5'-phosphate.

It catalyses the reaction O-phospho-L-serine + 2-oxoglutarate = 3-phosphooxypyruvate + L-glutamate. The enzyme catalyses 4-(phosphooxy)-L-threonine + 2-oxoglutarate = (R)-3-hydroxy-2-oxo-4-phosphooxybutanoate + L-glutamate. The protein operates within amino-acid biosynthesis; L-serine biosynthesis; L-serine from 3-phospho-D-glycerate: step 2/3. Its pathway is cofactor biosynthesis; pyridoxine 5'-phosphate biosynthesis; pyridoxine 5'-phosphate from D-erythrose 4-phosphate: step 3/5. Its function is as follows. Catalyzes the reversible conversion of 3-phosphohydroxypyruvate to phosphoserine and of 3-hydroxy-2-oxo-4-phosphonooxybutanoate to phosphohydroxythreonine. In Caenorhabditis elegans, this protein is Probable phosphoserine aminotransferase.